Reading from the N-terminus, the 374-residue chain is Protein dip1 (374 aa).

Belongs to the LDB17 family.

It localises to the cytoplasm. It is found in the nucleus. The protein resides in the cell tip. In terms of biological role, may be involved in protein-linked oligosaccharide phosphorylation. This Schizosaccharomyces pombe (strain 972 / ATCC 24843) (Fission yeast) protein is Protein dip1 (dip1).